The chain runs to 280 residues: Acetyl-coenzyme A carboxylase carboxyl transferase subunit beta (280 aa).

The CoA carboxyltransferase N-terminal domain occupies 25 to 280; it reads VMRECPICHA…RLHTKENAYG (256 aa). Residues Cys29, Cys32, Cys47, and Cys50 each coordinate Zn(2+). The segment at 29–50 adopts a C4-type zinc-finger fold; that stretch reads CPICHAKFLSMRLGRDHTCPKC.

Belongs to the AccD/PCCB family. In terms of assembly, acetyl-CoA carboxylase is a heterohexamer composed of biotin carboxyl carrier protein (AccB), biotin carboxylase (AccC) and two subunits each of ACCase subunit alpha (AccA) and ACCase subunit beta (AccD). Zn(2+) is required as a cofactor.

The protein localises to the cytoplasm. The catalysed reaction is N(6)-carboxybiotinyl-L-lysyl-[protein] + acetyl-CoA = N(6)-biotinyl-L-lysyl-[protein] + malonyl-CoA. It participates in lipid metabolism; malonyl-CoA biosynthesis; malonyl-CoA from acetyl-CoA: step 1/1. In terms of biological role, component of the acetyl coenzyme A carboxylase (ACC) complex. Biotin carboxylase (BC) catalyzes the carboxylation of biotin on its carrier protein (BCCP) and then the CO(2) group is transferred by the transcarboxylase to acetyl-CoA to form malonyl-CoA. In Lactobacillus helveticus (strain DPC 4571), this protein is Acetyl-coenzyme A carboxylase carboxyl transferase subunit beta.